Here is a 291-residue protein sequence, read N- to C-terminus: Putative heme-binding peroxidase (291 aa).

The Proton acceptor role is filled by His-61. His-185 is a binding site for heme b. Catalysis depends on Trp-201, which acts as the Tryptophan radical intermediate.

This sequence belongs to the peroxidase family. Cytochrome c peroxidase subfamily. The cofactor is heme b.

Functionally, destroys radicals which are normally produced within the cells and which are toxic to biological systems. The polypeptide is Putative heme-binding peroxidase (CCP2) (Candida albicans (strain SC5314 / ATCC MYA-2876) (Yeast)).